The primary structure comprises 244 residues: Carboxy-S-adenosyl-L-methionine synthase (244 aa).

S-adenosyl-L-methionine contacts are provided by residues Tyr-40, 65 to 67 (GCS), 90 to 91 (DN), Asn-134, and Arg-201.

Belongs to the class I-like SAM-binding methyltransferase superfamily. Cx-SAM synthase family. Homodimer.

It carries out the reaction prephenate + S-adenosyl-L-methionine = carboxy-S-adenosyl-L-methionine + 3-phenylpyruvate + H2O. Its function is as follows. Catalyzes the conversion of S-adenosyl-L-methionine (SAM) to carboxy-S-adenosyl-L-methionine (Cx-SAM). The polypeptide is Carboxy-S-adenosyl-L-methionine synthase (Citrifermentans bemidjiense (strain ATCC BAA-1014 / DSM 16622 / JCM 12645 / Bem) (Geobacter bemidjiensis)).